A 390-amino-acid chain; its full sequence is Chalcone synthase (390 aa).

Cys-164 is a catalytic residue.

The protein belongs to the thiolase-like superfamily. Chalcone/stilbene synthases family.

It catalyses the reaction (E)-4-coumaroyl-CoA + 3 malonyl-CoA + 3 H(+) = 2',4,4',6'-tetrahydroxychalcone + 3 CO2 + 4 CoA. Its pathway is secondary metabolite biosynthesis; flavonoid biosynthesis. The primary product of this enzyme is 4,2',4',6'-tetrahydroxychalcone (also termed naringenin-chalcone or chalcone) which can under specific conditions spontaneously isomerize into naringenin. This Onobrychis viciifolia (Common sainfoin) protein is Chalcone synthase (CHS).